A 243-amino-acid polypeptide reads, in one-letter code: PF03932 family protein CutC (243 aa).

The protein belongs to the CutC family.

It localises to the cytoplasm. The sequence is that of PF03932 family protein CutC from Glaesserella parasuis serovar 5 (strain SH0165) (Haemophilus parasuis).